The following is a 244-amino-acid chain: Capsid protein (244 aa).

The short motif at 1-24 is the Bipartite nuclear localization signal element; that stretch reads MSTSKRKRADEAQWNKRSTKKKGS. A disordered region spans residues 1–39; that stretch reads MSTSKRKRADEAQWNKRSTKKKGSAPQAKKPGGKGERPS.

It belongs to the geminiviridae capsid protein family. Homomultimer. Interacts with the movement protein. Binds to single-stranded and double-stranded viral DNA.

It is found in the virion. The protein resides in the host nucleus. In terms of biological role, encapsidates the viral genome into characteristic twinned ('geminate') particles. Binds the genomic viral ssDNA and shuttles it into and out of the cell nucleus. Plays a role in protection of the genome from degradation, virus acquisition and transmission by insect vectors, infectivity, and systemic movement. The CP of monopartite geminiviruses is absolutely essential for virus movement. This chain is Capsid protein, found in Avena sativa (Oat).